A 479-amino-acid chain; its full sequence is Siroheme synthase (479 aa).

Residues 1–202 (MNYLPIFLDL…GRDSEAEAQL (202 aa)) are precorrin-2 dehydrogenase /sirohydrochlorin ferrochelatase. NAD(+) contacts are provided by residues 22 to 23 (ET) and 43 to 44 (PA). A Phosphoserine modification is found at Ser-128. A uroporphyrinogen-III C-methyltransferase region spans residues 217–479 (GEVYLVGAGP…TPLEAPDHLA (263 aa)). Pro-226 contributes to the S-adenosyl-L-methionine binding site. The active-site Proton acceptor is Asp-249. The active-site Proton donor is Lys-271. Residues 302–304 (GGD), Ile-307, 332–333 (TA), Met-384, and Gly-413 each bind S-adenosyl-L-methionine.

The protein in the N-terminal section; belongs to the precorrin-2 dehydrogenase / sirohydrochlorin ferrochelatase family. It in the C-terminal section; belongs to the precorrin methyltransferase family.

The enzyme catalyses uroporphyrinogen III + 2 S-adenosyl-L-methionine = precorrin-2 + 2 S-adenosyl-L-homocysteine + H(+). It carries out the reaction precorrin-2 + NAD(+) = sirohydrochlorin + NADH + 2 H(+). The catalysed reaction is siroheme + 2 H(+) = sirohydrochlorin + Fe(2+). Its pathway is cofactor biosynthesis; adenosylcobalamin biosynthesis; precorrin-2 from uroporphyrinogen III: step 1/1. It functions in the pathway cofactor biosynthesis; adenosylcobalamin biosynthesis; sirohydrochlorin from precorrin-2: step 1/1. It participates in porphyrin-containing compound metabolism; siroheme biosynthesis; precorrin-2 from uroporphyrinogen III: step 1/1. The protein operates within porphyrin-containing compound metabolism; siroheme biosynthesis; siroheme from sirohydrochlorin: step 1/1. Its pathway is porphyrin-containing compound metabolism; siroheme biosynthesis; sirohydrochlorin from precorrin-2: step 1/1. In terms of biological role, multifunctional enzyme that catalyzes the SAM-dependent methylations of uroporphyrinogen III at position C-2 and C-7 to form precorrin-2 via precorrin-1. Then it catalyzes the NAD-dependent ring dehydrogenation of precorrin-2 to yield sirohydrochlorin. Finally, it catalyzes the ferrochelation of sirohydrochlorin to yield siroheme. This Thiobacillus denitrificans (strain ATCC 25259 / T1) protein is Siroheme synthase.